The sequence spans 481 residues: RAC-beta serine/threonine-protein kinase (481 aa).

M1 is modified (N-acetylmethionine). In terms of domain architecture, PH spans 5–108 (SVIKEGWLHK…WIRAIQMVAN (104 aa)). Phosphoserine is present on S34. An intrachain disulfide couples C60 to C77. S126 carries the post-translational modification Phosphoserine. S128 and S131 each carry an O-linked (GlcNAc) serine glycan. Residues 152–409 (FDYLKLLGKG…AKEVMEHRFF (258 aa)) enclose the Protein kinase domain. ATP-binding positions include 158 to 166 (LGKGTFGKV) and K181. D275 functions as the Proton acceptor in the catalytic mechanism. Residues N280 and D293 each contribute to the Mn(2+) site. Residue T306 is glycosylated (O-linked (GlcNAc) threonine). T309 bears the Phosphothreonine; by PDPK1 mark. O-linked (GlcNAc) threonine glycosylation is present at T313. The region spanning 410-481 (LSINWQDVVQ…QFSYSASIRE (72 aa)) is the AGC-kinase C-terminal domain. Residue S447 is modified to Phosphoserine. Position 451 is a phosphothreonine (T451). 3 positions are modified to phosphoserine: S461, S474, and S478. S474 carries O-linked (GlcNAc) serine; alternate glycosylation.

It belongs to the protein kinase superfamily. AGC Ser/Thr protein kinase family. RAC subfamily. Interacts with BTBD10. Interacts with KCTD20. Interacts (via PH domain) with MTCP1, TCL1A and TCL1B; this interaction may facilitate AKT2 oligomerization and phosphorylation, hence increasing kinase activity. Interacts with PHB2; this interaction may be important for myogenic differentiation. Interacts (when phosphorylated) with CLIP3; this interaction promotes cell membrane localization. Interacts with WDFY2 (via WD repeats 1-3). Phosphorylation on Thr-309 and Ser-474 is required for full activity. Phosphorylation of the activation loop at Thr-309 by PDPK1/PDK1 is a prerequisite for full activation. Phosphorylated and activated by PDPK1/PDK1 in the presence of phosphatidylinositol 3,4,5-trisphosphate. Phosphorylation by mTORC2 in response to growth factors plays a key role in AKT1 activation: mTORC2 phosphorylates different sites depending on the context, such as Ser-474 or Ser-478, thereby facilitating subsequent phosphorylation of the activation loop by PDPK1/PDK1. In terms of processing, ubiquitinated; undergoes both 'Lys-48'- and 'Lys-63'-linked polyubiquitination. TRAF6-induced 'Lys-63'-linked AKT2 ubiquitination. When fully phosphorylated and translocated into the nucleus, undergoes 'Lys-48'-polyubiquitination catalyzed by TTC3, leading to its degradation by the proteasome. Post-translationally, O-GlcNAcylation at Thr-306 and Thr-313 inhibits activating phosphorylation at Thr-309 via disrupting the interaction between AKT and PDPK1/PDK1. In terms of tissue distribution, expressed in adipocytes and hepatocytes (at protein level). Expressed at low levels in skeletal muscle (at protein level).

It localises to the cytoplasm. The protein resides in the nucleus. Its subcellular location is the cell membrane. The protein localises to the early endosome. It catalyses the reaction L-seryl-[protein] + ATP = O-phospho-L-seryl-[protein] + ADP + H(+). The catalysed reaction is L-threonyl-[protein] + ATP = O-phospho-L-threonyl-[protein] + ADP + H(+). With respect to regulation, phosphorylation at Thr-309 (in the kinase domain) and Ser-474 (in the C-terminal regulatory region) is required for full activation. In adipocytes and hepatocytes, the activation is induced by insulin. AKT2 phosphorylation of PKP1 is induced by insulin. Serine/threonine kinase closely related to AKT1 and AKT3. All 3 enzymes, AKT1, AKT2 and AKT3, are collectively known as AKT kinase. AKT regulates many processes including metabolism, proliferation, cell survival, growth and angiogenesis, through the phosphorylation of a range of downstream substrates. Over 100 substrates have been reported so far, although for most of them, the precise AKT kinase catalyzing the reaction was not specified. AKT regulates glucose uptake by mediating insulin-induced translocation of the SLC2A4/GLUT4 glucose transporter to the cell surface. Phosphorylation of PTPN1 at 'Ser-50' negatively modulates its phosphatase activity preventing dephosphorylation of the insulin receptor and the attenuation of insulin signaling. Phosphorylation of TBC1D4 triggers the binding of this effector to inhibitory 14-3-3 proteins, which is required for insulin-stimulated glucose transport. AKT also regulates the storage of glucose in the form of glycogen by phosphorylating GSK3A at 'Ser-21' and GSK3B at 'Ser-9', resulting in inhibition of its kinase activity. Phosphorylation of GSK3 isoforms by AKT is also thought to be one mechanism by which cell proliferation is driven. AKT also regulates cell survival via the phosphorylation of MAP3K5 (apoptosis signal-related kinase). Phosphorylation of 'Ser-83' decreases MAP3K5 kinase activity stimulated by oxidative stress and thereby prevents apoptosis. AKT mediates insulin-stimulated protein synthesis by phosphorylating TSC2 at 'Ser-939' and 'Thr-1462', thereby activating mTORC1 signaling and leading to both phosphorylation of 4E-BP1 and in activation of RPS6KB1. AKT is involved in the phosphorylation of members of the FOXO factors (Forkhead family of transcription factors), leading to binding of 14-3-3 proteins and cytoplasmic localization. In particular, FOXO1 is phosphorylated at 'Thr-24', 'Ser-256' and 'Ser-319'. FOXO3 and FOXO4 are phosphorylated on equivalent sites. AKT has an important role in the regulation of NF-kappa-B-dependent gene transcription and positively regulates the activity of CREB1 (cyclic AMP (cAMP)-response element binding protein). The phosphorylation of CREB1 induces the binding of accessory proteins that are necessary for the transcription of pro-survival genes such as BCL2 and MCL1. AKT phosphorylates 'Ser-454' on ATP citrate lyase (ACLY), thereby potentially regulating ACLY activity and fatty acid synthesis. Activates the 3B isoform of cyclic nucleotide phosphodiesterase (PDE3B) via phosphorylation of 'Ser-273', resulting in reduced cyclic AMP levels and inhibition of lipolysis. Phosphorylates PIKFYVE on 'Ser-318', which results in increased PI(3)P-5 activity. The Rho GTPase-activating protein DLC1 is another substrate and its phosphorylation is implicated in the regulation cell proliferation and cell growth. AKT plays a role as key modulator of the AKT-mTOR signaling pathway controlling the tempo of the process of newborn neurons integration during adult neurogenesis, including correct neuron positioning, dendritic development and synapse formation. Signals downstream of phosphatidylinositol 3-kinase (PI(3)K) to mediate the effects of various growth factors such as platelet-derived growth factor (PDGF), epidermal growth factor (EGF), insulin and insulin-like growth factor 1 (IGF1). AKT mediates the antiapoptotic effects of IGF1. Essential for the SPATA13-mediated regulation of cell migration and adhesion assembly and disassembly. May be involved in the regulation of the placental development. In response to lysophosphatidic acid stimulation, inhibits the ciliogenesis cascade. In this context, phosphorylates WDR44, hence stabilizing its interaction with Rab11 and preventing the formation of the ciliogenic Rab11-FIP3-RAB3IP complex. Also phosphorylates RAB3IP/Rabin8, thus may affect RAB3IP guanine nucleotide exchange factor (GEF) activity toward Rab8, which is important for cilia growth. Phosphorylates PKP1, facilitating its interaction with YWHAG and translocation to the nucleus, ultimately resulting in a reduction in keratinocyte intercellular adhesion. Phosphorylation of PKP1 increases PKP1 protein stability, translocation to the cytoplasm away from desmosome plaques and PKP1-driven cap-dependent translation. Its function is as follows. Several AKT2-specific substrates have been identified, including ANKRD2, C2CD5, CLK2 and PITX2. May play a role in myoblast differentiation. In this context, may act through PITX2 phosphorylation. Unphosphorylated PITX2 associates with an ELAVL1/HuR-containing complex, which stabilizes cyclin mRNA and ensuring cell proliferation. Phosphorylation by AKT2 impairs this association, leading to CCND1 mRNA destabilization and progression towards differentiation. Also involved in the negative regulation of myogenesis in response to stress conditions. In this context, acts by phosphorylating ANKRD2. May also be a key regulator of glucose uptake. Regulates insulin-stimulated glucose transport by the increase of glucose transporter GLUT4 translocation from intracellular stores to the plasma membrane. In this context, acts by phosphorylating C2CD5/CDP138 on 'Ser-197' in insulin-stimulated adipocytes. Through the phosphorylation of CLK2 on 'Thr-343', involved in insulin-regulated suppression of hepatic gluconeogenesis. The sequence is that of RAC-beta serine/threonine-protein kinase from Rattus norvegicus (Rat).